A 549-amino-acid chain; its full sequence is Threonine--tRNA ligase catalytic subunit (549 aa).

The tract at residues Asp-142 to Pro-437 is catalytic. Residues Cys-235, His-286, and His-414 each contribute to the Zn(2+) site.

It belongs to the class-II aminoacyl-tRNA synthetase family. As to quaternary structure, homodimer. Probably interacts with its editing subunit. Zn(2+) is required as a cofactor.

It localises to the cytoplasm. It catalyses the reaction tRNA(Thr) + L-threonine + ATP = L-threonyl-tRNA(Thr) + AMP + diphosphate + H(+). Its function is as follows. Catalyzes the attachment of threonine to tRNA(Thr) in a two-step reaction: L-threonine is first activated by ATP to form Thr-AMP and then transferred to the acceptor end of tRNA(Thr). Also activates L-serine and transfers it to tRNA(Thr) but cannot deacylate incorrectly charged amino acid; unlike most archaea the editing function is found in a freestanding protein. In Sulfolobus acidocaldarius (strain ATCC 33909 / DSM 639 / JCM 8929 / NBRC 15157 / NCIMB 11770), this protein is Threonine--tRNA ligase catalytic subunit.